Reading from the N-terminus, the 406-residue chain is Glucose-6-phosphate isomerase (406 aa).

Catalysis depends on Glu-259, which acts as the Proton donor. Active-site residues include His-284 and Lys-397.

This sequence belongs to the GPI family.

Its subcellular location is the cytoplasm. The catalysed reaction is alpha-D-glucose 6-phosphate = beta-D-fructose 6-phosphate. It participates in carbohydrate biosynthesis; gluconeogenesis. It functions in the pathway carbohydrate degradation; glycolysis; D-glyceraldehyde 3-phosphate and glycerone phosphate from D-glucose: step 2/4. Its function is as follows. Catalyzes the reversible isomerization of glucose-6-phosphate to fructose-6-phosphate. The protein is Glucose-6-phosphate isomerase of Campylobacter jejuni subsp. jejuni serotype O:2 (strain ATCC 700819 / NCTC 11168).